The sequence spans 277 residues: Probable endonuclease 4 (277 aa).

Positions 67, 107, 142, 176, 179, 211, 224, 226, and 256 each coordinate Zn(2+).

It belongs to the AP endonuclease 2 family. It depends on Zn(2+) as a cofactor.

It carries out the reaction Endonucleolytic cleavage to 5'-phosphooligonucleotide end-products.. Endonuclease IV plays a role in DNA repair. It cleaves phosphodiester bonds at apurinic or apyrimidinic (AP) sites, generating a 3'-hydroxyl group and a 5'-terminal sugar phosphate. In Clostridium botulinum (strain Alaska E43 / Type E3), this protein is Probable endonuclease 4.